The chain runs to 174 residues: Endoribonuclease YbeY (174 aa).

Zn(2+)-binding residues include His-129, His-133, and His-139.

Belongs to the endoribonuclease YbeY family. It depends on Zn(2+) as a cofactor.

The protein localises to the cytoplasm. Single strand-specific metallo-endoribonuclease involved in late-stage 70S ribosome quality control and in maturation of the 3' terminus of the 16S rRNA. In Lactobacillus delbrueckii subsp. bulgaricus (strain ATCC 11842 / DSM 20081 / BCRC 10696 / JCM 1002 / NBRC 13953 / NCIMB 11778 / NCTC 12712 / WDCM 00102 / Lb 14), this protein is Endoribonuclease YbeY.